Here is a 446-residue protein sequence, read N- to C-terminus: Phosphoglucosamine mutase (446 aa).

Ser-101 acts as the Phosphoserine intermediate in catalysis. The Mg(2+) site is built by Ser-101, Asp-240, Asp-242, and Asp-244. Ser-101 is subject to Phosphoserine.

It belongs to the phosphohexose mutase family. It depends on Mg(2+) as a cofactor. In terms of processing, activated by phosphorylation.

The enzyme catalyses alpha-D-glucosamine 1-phosphate = D-glucosamine 6-phosphate. Its function is as follows. Catalyzes the conversion of glucosamine-6-phosphate to glucosamine-1-phosphate. The sequence is that of Phosphoglucosamine mutase from Coxiella burnetii (strain Dugway 5J108-111).